We begin with the raw amino-acid sequence, 505 residues long: Maturase K (505 aa).

The protein belongs to the intron maturase 2 family. MatK subfamily.

It localises to the plastid. It is found in the chloroplast. In terms of biological role, usually encoded in the trnK tRNA gene intron. Probably assists in splicing its own and other chloroplast group II introns. The protein is Maturase K of Illicium oligandrum (Star anise).